The sequence spans 207 residues: uncharacterized protein (207 aa).

Belongs to the flavoredoxin family. FMN serves as cofactor.

This is an uncharacterized protein from Bacillus subtilis (strain 168).